Here is a 315-residue protein sequence, read N- to C-terminus: Replication factor C small subunit (315 aa).

Residue 43 to 50 (GSPGVGKT) coordinates ATP.

It belongs to the activator 1 small subunits family. RfcS subfamily. Heteromultimer composed of small subunits (RfcS) and large subunits (RfcL).

Part of the RFC clamp loader complex which loads the PCNA sliding clamp onto DNA. This Methanococcus maripaludis (strain C5 / ATCC BAA-1333) protein is Replication factor C small subunit.